We begin with the raw amino-acid sequence, 103 residues long: Small ribosomal subunit protein uS10c (103 aa).

The protein belongs to the universal ribosomal protein uS10 family. As to quaternary structure, part of the 30S ribosomal subunit.

The protein resides in the plastid. The protein localises to the chloroplast. Its function is as follows. Involved in the binding of tRNA to the ribosomes. The protein is Small ribosomal subunit protein uS10c of Emiliania huxleyi (Coccolithophore).